A 354-amino-acid polypeptide reads, in one-letter code: uncharacterized protein (354 aa).

The next 9 helical transmembrane spans lie at 9 to 29 (MGKI…LIFS), 31 to 51 (ISIN…ISFT), 76 to 96 (NFGI…LIWV), 109 to 129 (FLNV…AIVV), 144 to 164 (IIFS…VLLI), 185 to 205 (GILV…ALGV), 278 to 298 (YGTL…GFFY), 306 to 326 (GIYL…IESG), and 327 to 347 (ILDI…IYAI).

The protein resides in the cell membrane. This is an uncharacterized protein from Methanocaldococcus jannaschii (strain ATCC 43067 / DSM 2661 / JAL-1 / JCM 10045 / NBRC 100440) (Methanococcus jannaschii).